Here is a 387-residue protein sequence, read N- to C-terminus: NAD(P)H oxidoreductase RTN4IP1, mitochondrial (387 aa).

The transit peptide at 1–27 (MLMCRRWLVCSLRCHYRSFSFSAARRT) directs the protein to the mitochondrion. The region spanning 38 to 379 (GKNDVLRFTK…QGHARGKTVV (342 aa)) is the Enoyl reductase (ER) domain. Residues S200, G202, V203, S223, Y241, L286, G327, F329, H372, A373, and R374 each coordinate NADPH.

Belongs to the zinc-containing alcohol dehydrogenase family. Quinone oxidoreductase subfamily.

Its subcellular location is the mitochondrion matrix. The protein resides in the mitochondrion outer membrane. The catalysed reaction is a 3-demethylubiquinone + NADH + 2 H(+) = a 3-demethylubiquinol + NAD(+). The enzyme catalyses a 3-demethylubiquinone + NADPH + 2 H(+) = a 3-demethylubiquinol + NADP(+). It carries out the reaction 3-demethylubiquinone-10 + NADH + 2 H(+) = 3-demethylubiquinol-10 + NAD(+). It catalyses the reaction 3-demethylubiquinone-10 + NADPH + 2 H(+) = 3-demethylubiquinol-10 + NADP(+). It functions in the pathway cofactor biosynthesis; ubiquinone biosynthesis. Functionally, NAD(P)H oxidoreductase involved in the ubiquinone biosynthetic pathway. Required for the O-methyltransferase activity of COQ3. Able to catalyze the oxidoreduction of 3-demethylubiquinone into 3-demethylubiquinol in vitro. However, it is unclear if 3-demethylubiquinone constitutes a substrate in vivo. May also play a role in the regulation of retinal ganglion cell (RGC) neurite outgrowth, and hence in the development of the inner retina and optic nerve. The chain is NAD(P)H oxidoreductase RTN4IP1, mitochondrial (rtn4ip1) from Danio rerio (Zebrafish).